The sequence spans 378 residues: Mas-related G-protein coupled receptor MRG (378 aa).

The Extracellular segment spans residues 1–77; that stretch reads MVWGKICWFS…VGQQALPLNI (77 aa). N-linked (GlcNAc...) asparagine glycans are attached at residues Asn-54 and Asn-57. The helical transmembrane segment at 78–101 threads the bilayer; the sequence is IAPKAVLVSLCGVLLNGTVFWLLC. Residues 102-109 are Cytoplasmic-facing; the sequence is CGATNPYM. A helical membrane pass occupies residues 110 to 136; the sequence is VYILHLVAADVIYLCCSAVGFLQVTLL. Residues 137-154 lie on the Extracellular side of the membrane; it reads TYHGVVFFIPDFLAILSP. Residues 155 to 169 form a helical membrane-spanning segment; it reads FSFEVCLCLLVAIST. The Cytoplasmic segment spans residues 170 to 191; it reads ERCVCVLFPIWYRCHRPKYTSN. The chain crosses the membrane as a helical span at residues 192 to 207; the sequence is VVCTLIWGLPFCINIV. Over 208 to 221 the chain is Extracellular; sequence KSLFLTYWKHVKAC. The chain crosses the membrane as a helical span at residues 222-248; the sequence is VIFLKLSGLFHAILSLVMCVSSLTLLI. The Cytoplasmic segment spans residues 249–264; the sequence is RFLCCSQQQKATRVYA. The helical transmembrane segment at 265–286 threads the bilayer; it reads VVQISAPMFLLWALPLSVAPLI. At 287 to 297 the chain is on the extracellular side; that stretch reads TDFKMFVTTSY. The chain crosses the membrane as a helical span at residues 298-317; the sequence is LISLFLIINSSANPIIYFFV. The Cytoplasmic portion of the chain corresponds to 318–378; that stretch reads GSLRKKRLKE…PREHRVDVET (61 aa). The segment at 344–378 is disordered; sequence GRNKKAAGIDPMEQPHSTQHVENLLPREHRVDVET. Over residues 368-378 the composition is skewed to basic and acidic residues; it reads LPREHRVDVET.

Belongs to the G-protein coupled receptor 1 family. Mas subfamily.

Its subcellular location is the cell membrane. This chain is Mas-related G-protein coupled receptor MRG (MAS1L), found in Homo sapiens (Human).